A 442-amino-acid polypeptide reads, in one-letter code: tRNA modification GTPase MnmE (442 aa).

The (6S)-5-formyl-5,6,7,8-tetrahydrofolate site is built by Arg-27, Glu-84, and Lys-124. Positions 221–366 constitute a TrmE-type G domain; it reads GLHVVIVGAP…LLDALQAFAE (146 aa). Residues 231–236, 250–256, and 275–278 each bind GTP; these read NAGKSS, SEEAGTT, and DTAG. Ser-235 and Thr-256 together coordinate Mg(2+). Lys-442 is a (6S)-5-formyl-5,6,7,8-tetrahydrofolate binding site.

The protein belongs to the TRAFAC class TrmE-Era-EngA-EngB-Septin-like GTPase superfamily. TrmE GTPase family. As to quaternary structure, homodimer. Heterotetramer of two MnmE and two MnmG subunits. K(+) serves as cofactor.

Its subcellular location is the cytoplasm. Its function is as follows. Exhibits a very high intrinsic GTPase hydrolysis rate. Involved in the addition of a carboxymethylaminomethyl (cmnm) group at the wobble position (U34) of certain tRNAs, forming tRNA-cmnm(5)s(2)U34. In Brucella ovis (strain ATCC 25840 / 63/290 / NCTC 10512), this protein is tRNA modification GTPase MnmE.